The chain runs to 257 residues: 14-3-3-like protein GF14-G (257 aa).

Belongs to the 14-3-3 family.

In terms of biological role, is associated with a DNA binding complex that binds to the G box, a well-characterized cis-acting DNA regulatory element found in plant genes. The polypeptide is 14-3-3-like protein GF14-G (GF14G) (Oryza sativa subsp. japonica (Rice)).